A 274-amino-acid polypeptide reads, in one-letter code: Large ribosomal subunit protein uL2 (274 aa).

The disordered stretch occupies residues 223–265 (VVMNPVDHPHGGGEGRTSGGRHPVSPWGVPTKGYKTRSNKRTD).

The protein belongs to the universal ribosomal protein uL2 family. In terms of assembly, part of the 50S ribosomal subunit. Forms a bridge to the 30S subunit in the 70S ribosome.

Functionally, one of the primary rRNA binding proteins. Required for association of the 30S and 50S subunits to form the 70S ribosome, for tRNA binding and peptide bond formation. It has been suggested to have peptidyltransferase activity; this is somewhat controversial. Makes several contacts with the 16S rRNA in the 70S ribosome. This is Large ribosomal subunit protein uL2 from Vibrio vulnificus (strain CMCP6).